A 429-amino-acid polypeptide reads, in one-letter code: D-amino acid dehydrogenase (429 aa).

3–17 lines the FAD pocket; the sequence is VLILGSGVIGTTTAW.

Belongs to the DadA oxidoreductase family. The cofactor is FAD.

It carries out the reaction a D-alpha-amino acid + A + H2O = a 2-oxocarboxylate + AH2 + NH4(+). Its pathway is amino-acid degradation; D-alanine degradation; NH(3) and pyruvate from D-alanine: step 1/1. Functionally, oxidative deamination of D-amino acids. This Xanthomonas campestris pv. campestris (strain 8004) protein is D-amino acid dehydrogenase.